The sequence spans 74 residues: DUP240 protein DFP2 (74 aa).

This sequence belongs to the DUP/COS family.

It localises to the cytoplasm. It is found in the membrane. The polypeptide is DUP240 protein DFP2 (Saccharomyces cerevisiae (strain ATCC 204508 / S288c) (Baker's yeast)).